The sequence spans 393 residues: NADH-quinone oxidoreductase subunit D (393 aa).

The protein belongs to the complex I 49 kDa subunit family. In terms of assembly, NDH-1 is composed of 14 different subunits. Subunits NuoB, C, D, E, F, and G constitute the peripheral sector of the complex.

Its subcellular location is the cell inner membrane. It carries out the reaction a quinone + NADH + 5 H(+)(in) = a quinol + NAD(+) + 4 H(+)(out). Its function is as follows. NDH-1 shuttles electrons from NADH, via FMN and iron-sulfur (Fe-S) centers, to quinones in the respiratory chain. The immediate electron acceptor for the enzyme in this species is believed to be ubiquinone. Couples the redox reaction to proton translocation (for every two electrons transferred, four hydrogen ions are translocated across the cytoplasmic membrane), and thus conserves the redox energy in a proton gradient. This Ehrlichia ruminantium (strain Welgevonden) protein is NADH-quinone oxidoreductase subunit D.